Here is a 157-residue protein sequence, read N- to C-terminus: MFDVLMYLFETYIHTEAELRVDQDKLEQDLTDAGFDREDIYNALLWLEKLADYQEGLAEPMQLASDPLSMRIYTPEECERLDASCRGFLLFLEQIQVLNLETREMVIERVLALDTAEFDLEDLKWVILMVLFNIPGCENAYQQMEELLFEVNEGMLH.

Belongs to the Smg family.

The sequence is that of Protein Smg from Escherichia coli O139:H28 (strain E24377A / ETEC).